The chain runs to 235 residues: Small ribosomal subunit protein uS2c (235 aa).

This sequence belongs to the universal ribosomal protein uS2 family.

It is found in the plastid. Its subcellular location is the chloroplast. The chain is Small ribosomal subunit protein uS2c (rps2) from Marchantia polymorpha (Common liverwort).